A 308-amino-acid polypeptide reads, in one-letter code: D-alanine--D-alanine ligase (308 aa).

One can recognise an ATP-grasp domain in the interval 102 to 302 (KKVAAAAGVA…FGELLSWMVE (201 aa)). 128–183 (PMEPPYVVKPVREGSSFGVVIVKEDQTHPPQIISSAEWNYGAEVLVEKYIPGRELT) contributes to the ATP binding site. Positions 252, 269, and 271 each coordinate Mg(2+).

It belongs to the D-alanine--D-alanine ligase family. It depends on Mg(2+) as a cofactor. Requires Mn(2+) as cofactor.

The protein localises to the cytoplasm. It carries out the reaction 2 D-alanine + ATP = D-alanyl-D-alanine + ADP + phosphate + H(+). It participates in cell wall biogenesis; peptidoglycan biosynthesis. Its function is as follows. Cell wall formation. The polypeptide is D-alanine--D-alanine ligase (Brucella anthropi (strain ATCC 49188 / DSM 6882 / CCUG 24695 / JCM 21032 / LMG 3331 / NBRC 15819 / NCTC 12168 / Alc 37) (Ochrobactrum anthropi)).